The primary structure comprises 108 residues: Hydrogenase expression/formation protein HupN (108 aa).

The interval 88 to 108 (REPQLPPHLQAQLPPKEPNSP) is disordered.

This sequence belongs to the HupF/HypC family.

This chain is Hydrogenase expression/formation protein HupN (hupN), found in Azotobacter chroococcum mcd 1.